The sequence spans 400 residues: Lysophospholipid transporter LplT (400 aa).

The next 12 membrane-spanning stretches (helical) occupy residues 19 to 39, 53 to 73, 91 to 111, 139 to 159, 164 to 184, 195 to 213, 227 to 247, 257 to 277, 281 to 301, 304 to 324, 352 to 372, and 373 to 393; these read VIVA…ATLA, VLQM…GQIA, AGAA…LVGI, LMEA…GVLA, IAAL…NLFI, SWRL…VVLW, LFWG…PVAL, YLNA…AKLV, TVSR…IFSL, ALLP…FFVV, NSAM…GVPA, and VAIG…LWIW.

This sequence belongs to the major facilitator superfamily. LplT (TC 2.A.1.42) family.

It localises to the cell inner membrane. Its function is as follows. Catalyzes the facilitated diffusion of 2-acyl-glycero-3-phosphoethanolamine (2-acyl-GPE) into the cell. The protein is Lysophospholipid transporter LplT of Salmonella agona (strain SL483).